The chain runs to 143 residues: Transcription antitermination protein NusB (143 aa).

Belongs to the NusB family.

Functionally, involved in transcription antitermination. Required for transcription of ribosomal RNA (rRNA) genes. Binds specifically to the boxA antiterminator sequence of the ribosomal RNA (rrn) operons. The sequence is that of Transcription antitermination protein NusB from Desulforapulum autotrophicum (strain ATCC 43914 / DSM 3382 / VKM B-1955 / HRM2) (Desulfobacterium autotrophicum).